The following is a 209-amino-acid chain: Transcription antitermination protein NusB (209 aa).

It belongs to the NusB family.

In terms of biological role, involved in transcription antitermination. Required for transcription of ribosomal RNA (rRNA) genes. Binds specifically to the boxA antiterminator sequence of the ribosomal RNA (rrn) operons. This is Transcription antitermination protein NusB from Cyanothece sp. (strain PCC 7425 / ATCC 29141).